Reading from the N-terminus, the 434-residue chain is Probable phosphoglucosamine mutase (434 aa).

Serine 91 acts as the Phosphoserine intermediate in catalysis. Mg(2+) is bound by residues serine 91, aspartate 229, aspartate 231, and aspartate 233. The residue at position 91 (serine 91) is a Phosphoserine.

Belongs to the phosphohexose mutase family. Requires Mg(2+) as cofactor. In terms of processing, activated by phosphorylation.

It catalyses the reaction alpha-D-glucosamine 1-phosphate = D-glucosamine 6-phosphate. Functionally, catalyzes the conversion of glucosamine-6-phosphate to glucosamine-1-phosphate. This Methanosarcina barkeri (strain Fusaro / DSM 804) protein is Probable phosphoglucosamine mutase.